The sequence spans 107 residues: uncharacterized protein (107 aa).

A helical transmembrane segment spans residues 52-72 (LIIHDLFIYIFILNFFFFPFC).

It is found in the membrane. This is an uncharacterized protein from Saccharomyces cerevisiae (strain ATCC 204508 / S288c) (Baker's yeast).